The following is a 152-amino-acid chain: D-aminoacyl-tRNA deacylase (152 aa).

The short motif at 137 to 138 is the Gly-cisPro motif, important for rejection of L-amino acids element; the sequence is GP.

Belongs to the DTD family. As to quaternary structure, homodimer.

It localises to the cytoplasm. The catalysed reaction is glycyl-tRNA(Ala) + H2O = tRNA(Ala) + glycine + H(+). It catalyses the reaction a D-aminoacyl-tRNA + H2O = a tRNA + a D-alpha-amino acid + H(+). Functionally, an aminoacyl-tRNA editing enzyme that deacylates mischarged D-aminoacyl-tRNAs. Also deacylates mischarged glycyl-tRNA(Ala), protecting cells against glycine mischarging by AlaRS. Acts via tRNA-based rather than protein-based catalysis; rejects L-amino acids rather than detecting D-amino acids in the active site. By recycling D-aminoacyl-tRNA to D-amino acids and free tRNA molecules, this enzyme counteracts the toxicity associated with the formation of D-aminoacyl-tRNA entities in vivo and helps enforce protein L-homochirality. This is D-aminoacyl-tRNA deacylase from Geobacillus sp. (strain WCH70).